The following is an 828-amino-acid chain: Auxin response factor 2B (828 aa).

The segment at residues 128–230 (FCKTLTASDT…ELRVGVRRAM (103 aa)) is a DNA-binding region (TF-B3). 3 disordered regions span residues 348–397 (PDRV…GSSK), 681–703 (EQFQ…HSTR), and 791–828 (NPGT…PEDS). Positions 360–370 (LSPPALNPLPI) are enriched in pro residues. The span at 380–390 (VLPSSPDSSVL) shows a compositional bias: polar residues. The PB1 domain occupies 703 to 786 (RSCTKVHKQG…RKIFIYTKDE (84 aa)). Residues 791–806 (NPGTLNSKGEDNSSVA) show a composition bias toward polar residues.

Belongs to the ARF family. In terms of assembly, homodimers and heterodimers. In terms of tissue distribution, expressed in root, leaf and stem. Also expressed in flower and fruit. Expressed in flower buds about three days before opening including stamen, petal and sepal with the highest in ovary.

It is found in the nucleus. In terms of biological role, auxin response factors (ARFs) are transcriptional factors that binds specifically to the DNA sequence 5'-TGTCTC-3' found in the auxin-responsive promoter elements (AuxREs). Could act as transcriptional activator or repressor. Involved in the control of fruit ripening process. Regulates expression of a number of ripening regulators, transcription factors, and ethylene biosynthesis and signaling components. May act as a transcriptional repressor of auxin-responsive genes. In Solanum lycopersicum (Tomato), this protein is Auxin response factor 2B.